We begin with the raw amino-acid sequence, 598 residues long: Cytochrome P450 monooxygenase phmB (598 aa).

Residues 107–127 traverse the membrane as a helical segment; sequence VAAKIAALLFVAGLFWAVSVL. N-linked (GlcNAc...) asparagine glycans are attached at residues Asn171, Asn428, and Asn494. Cys542 is a heme binding site. Residues Asn549 and Asn581 are each glycosylated (N-linked (GlcNAc...) asparagine).

The protein belongs to the cytochrome P450 family. The cofactor is heme.

The protein localises to the membrane. It participates in mycotoxin biosynthesis. In terms of biological role, cytochrome P450 monooxygenase; part of the gene cluster that mediates the biosynthesis of the mycotoxins phomacins, leucine-derived cytochalasans with potent actin polymerization-inhibitory activities and monocot-specific antigerminative activities. The first step in the pathway is catalyzed by the hybrid PKS-NRPS phmA, assisted by the enoyl reductase phmE, that are responsible for fusion of the leucine precursor and the polyketide backbone to produce a 2-pyrrolidone intermediate. The polyketide synthase module (PKS) of phmA is responsible for the synthesis of the polyketide backbone and the downstream nonribosomal peptide synthetase (NRPS) amidates the carboxyl end of the polyketide with the leucine precursor. Because phmA lacks a designated enoylreductase (ER) domain, the required activity is provided the enoyl reductase phmE. Reduction by the hydrolyase phmG, followed by dehydration and intra-molecular Diels-Alder cyclization by the Diels-Alderase phmD then yield the required isoindolone-fused macrocycle. A number of oxidative steps catalyzed by the tailoring cytochrome P450 monooxygenase phmB, the FAD-linked oxidoreductase phmC and the short-chain dehydrogenase/reductase phmF, are further required to afford the final products, phomacin D and phomacin E. The sequence is that of Cytochrome P450 monooxygenase phmB from Phaeosphaeria nodorum (strain SN15 / ATCC MYA-4574 / FGSC 10173) (Glume blotch fungus).